The following is a 258-amino-acid chain: tRNA pseudouridine synthase A (258 aa).

The active-site Nucleophile is the D52. Y111 is a binding site for substrate.

The protein belongs to the tRNA pseudouridine synthase TruA family. Homodimer.

It carries out the reaction uridine(38/39/40) in tRNA = pseudouridine(38/39/40) in tRNA. Formation of pseudouridine at positions 38, 39 and 40 in the anticodon stem and loop of transfer RNAs. In Azorhizobium caulinodans (strain ATCC 43989 / DSM 5975 / JCM 20966 / LMG 6465 / NBRC 14845 / NCIMB 13405 / ORS 571), this protein is tRNA pseudouridine synthase A.